A 683-amino-acid polypeptide reads, in one-letter code: U4/U6 small nuclear ribonucleoprotein Prp3 (683 aa).

The 87-residue stretch at 1–87 (MALSKRELDE…HSKSSSDRSR (87 aa)) folds into the PWI domain. Residues 73-107 (GRSSRHSKSSSDRSRKRELKEVFGDDSEISKESSG) are compositionally biased toward basic and acidic residues. A disordered region spans residues 73–135 (GRSSRHSKSS…IPGPPSESPG (63 aa)). Residue Lys139 forms a Glycyl lysine isopeptide (Lys-Gly) (interchain with G-Cter in SUMO2) linkage. Residues 153 to 183 (IEERKKQLSFISPPTPQPKTPSSSQPERLPI) are disordered. Ser164 carries the post-translational modification Phosphoserine. Residue Thr167 is modified to Phosphothreonine. Glycyl lysine isopeptide (Lys-Gly) (interchain with G-Cter in SUMO2) cross-links involve residues Lys244 and Lys252. The segment at 416–550 (NLVEHPAQLN…VHISVYRVRN (135 aa)) is mediates interaction with SART3. Ser619 carries the post-translational modification Phosphoserine.

In terms of assembly, component of the precatalytic spliceosome (spliceosome B complex). Component of the U4/U6-U5 tri-snRNP complex, a building block of the precatalytic spliceosome (spliceosome B complex). The U4/U6-U5 tri-snRNP complex is composed of the U4, U6 and U5 snRNAs and at least PRPF3, PRPF4, PRPF6, PRPF8, PRPF31, SNRNP200, TXNL4A, SNRNP40, SNRPB, SNRPD1, SNRPD2, SNRPD3, SNRPE, SNRPF, SNRPG, DDX23, CD2BP2, PPIH, SNU13, EFTUD2, SART1 and USP39, plus LSM2, LSM3, LSM4, LSM5, LSM6, LSM7 and LSM8. Interacts directly with PRPF4. Part of a heteromeric complex containing PPIH, PRPF3 and PRPF4 that is stable in the absence of RNA. Interacts with SART3; the interaction is direct and recruits the deubiquitinase USP4 to PRPF3. Interacts with PRPF19. Interacts ('Lys-63'-linked polyubiquitinated) with PRPF8 (via the MPN (JAB/Mov34) domain); may stabilize the U4/U6-U5 tri-snRNP complex. Interacts with ERCC6. Ubiquitinated. Undergoes 'Lys-63'-linked polyubiquitination by PRPF19 and deubiquitination by USP4. 'Lys-63'-linked ubiquitination increases the affinity for PRPF8 and may regulate the assembly of the U4/U6-U5 tri-snRNP complex. Highly expressed in retina, liver, kidney and blood. Detected at lower levels in heart and brain.

It localises to the nucleus. It is found in the nucleus speckle. Its function is as follows. Plays a role in pre-mRNA splicing as component of the U4/U6-U5 tri-snRNP complex that is involved in spliceosome assembly, and as component of the precatalytic spliceosome (spliceosome B complex). In Homo sapiens (Human), this protein is U4/U6 small nuclear ribonucleoprotein Prp3 (PRPF3).